The chain runs to 678 residues: uncharacterized protein (678 aa).

The interval 1-26 (MGVHFDDNANTTWEATDPGVSSDCDG) is disordered. The next 9 membrane-spanning stretches (helical) occupy residues 119–139 (LLLL…LIYP), 245–265 (SFPC…GGCT), 317–337 (AAVV…YDSI), 340–360 (YWIN…PPLL), 371–391 (ELFS…YVVW), 405–425 (IAKV…NVTF), 443–463 (GALT…VIQA), 475–495 (YFKI…LPGL), and 519–539 (AYLF…RWDF).

The protein localises to the vacuole membrane. This is an uncharacterized protein from Saccharomyces cerevisiae (strain ATCC 204508 / S288c) (Baker's yeast).